The chain runs to 370 residues: Zinc finger protein 830 (370 aa).

Disordered stretches follow at residues 1–21 (MASSTSARTPAGKRVVNQEEL) and 75–220 (HRER…LVPH). N-acetylalanine is present on A2. Residues 16 to 40 (VNQEELRRLMKEKQRLSTNRKRIES) adopt a coiled-coil conformation. The segment at 53–75 (CALCNTPVKSELLWQTHVLGKQH) adopts a C2H2-type zinc-finger fold. The span at 90 to 99 (QGPSAGTAPQ) shows a compositional bias: polar residues. A compositionally biased stretch (basic and acidic residues) spans 104-115 (KTTDVESQDAKK). The segment covering 121–134 (DQVQPSTSASSANF) has biased composition (polar residues). Over residues 156–171 (DYEEEEEEEEEEELGG) the composition is skewed to acidic residues. Residues 172 to 191 (GEERRDSSKHLPDAQGREHS) are compositionally biased toward basic and acidic residues. Over residues 196-212 (RETTSNVLPNDPFNTNP) the composition is skewed to polar residues. The residue at position 223 (S223) is a Phosphoserine. Residues 310 to 338 (IECYRRVEKLRNRQDEIKNKLKEVLTIKE) are a coiled coil. Phosphoserine occurs at positions 349 and 360.

Component of the XAB2 complex, a multimeric protein complex composed of XAB2, PRPF19, AQR, ZNF830, ISY1, and PPIE; this complex binds preferentially to RNA. Interacts with XAB2. Identified in a pentameric intron-binding (IB) complex composed of AQR, XAB2, ISY1, ZNF830 and PPIE that is incorporated into the spliceosome as a preassembled complex. The IB complex does not contain PRPF19. In terms of processing, phosphorylated in response to DNA damage by the cell cycle checkpoint kinases ATR/ATM.

Its subcellular location is the nucleus. It localises to the chromosome. The protein resides in the nucleus speckle. Its function is as follows. May play a role in pre-mRNA splicing as component of the spliceosome. Acts as an important regulator of the cell cycle that participates in the maintenance of genome integrity. During cell cycle progression in embryonic fibroblast, prevents replication fork collapse, double-strand break formation and cell cycle checkpoint activation. Controls mitotic cell cycle progression and cell survival in rapidly proliferating intestinal epithelium and embryonic stem cells. During the embryo preimplantation, controls different aspects of M phase. During early oocyte growth, plays a role in oocyte survival by preventing chromosomal breaks formation, activation of TP63 and reduction of transcription. In Rattus norvegicus (Rat), this protein is Zinc finger protein 830.